A 98-amino-acid polypeptide reads, in one-letter code: Protein translation factor SUI1 homolog (98 aa).

The protein belongs to the SUI1 family.

This chain is Protein translation factor SUI1 homolog, found in Pyrococcus abyssi (strain GE5 / Orsay).